Consider the following 234-residue polypeptide: uncharacterized protein (234 aa).

10–34 (VVTGASSGIGASIAETLANQGVKVV) is a binding site for NADP(+). Substrate is bound at residue serine 143. The active-site Proton acceptor is tyrosine 156.

The protein belongs to the short-chain dehydrogenases/reductases (SDR) family.

This is an uncharacterized protein from Staphylococcus saprophyticus subsp. saprophyticus (strain ATCC 15305 / DSM 20229 / NCIMB 8711 / NCTC 7292 / S-41).